We begin with the raw amino-acid sequence, 355 residues long: RNA 3'-terminal phosphate cyclase (355 aa).

ATP is bound by residues glutamine 100 and 300–304; that span reads HLADQ. Histidine 325 (tele-AMP-histidine intermediate) is an active-site residue.

The protein belongs to the RNA 3'-terminal cyclase family. Type 1 subfamily.

It localises to the cytoplasm. It carries out the reaction a 3'-end 3'-phospho-ribonucleotide-RNA + ATP = a 3'-end 2',3'-cyclophospho-ribonucleotide-RNA + AMP + diphosphate. Its function is as follows. Catalyzes the conversion of 3'-phosphate to a 2',3'-cyclic phosphodiester at the end of RNA. The mechanism of action of the enzyme occurs in 3 steps: (A) adenylation of the enzyme by ATP; (B) transfer of adenylate to an RNA-N3'P to produce RNA-N3'PP5'A; (C) and attack of the adjacent 2'-hydroxyl on the 3'-phosphorus in the diester linkage to produce the cyclic end product. The biological role of this enzyme is unknown but it is likely to function in some aspects of cellular RNA processing. This Methanosarcina acetivorans (strain ATCC 35395 / DSM 2834 / JCM 12185 / C2A) protein is RNA 3'-terminal phosphate cyclase.